Consider the following 254-residue polypeptide: PF03932 family protein CutC (254 aa).

The protein belongs to the CutC family.

The protein localises to the cytoplasm. This Yersinia pestis bv. Antiqua (strain Antiqua) protein is PF03932 family protein CutC.